Consider the following 372-residue polypeptide: Envelope phospholipase OPG057 (372 aa).

Residues 153-156 (YPPL) carry the YPPL motif. S-palmitoyl cysteine; by host attachment occurs at residues cysteine 185 and cysteine 186. In terms of domain architecture, PLD phosphodiesterase spans 307–334 (FTIQNNTKLLIVDDEYVHITSANFDGTH).

This sequence belongs to the orthopoxvirus OPG057 family. Interacts with protein OPG190. In terms of processing, palmitoylated. Attachment of the palmitate moiety is essential for correct intracellular targeting and protein function.

It localises to the virion membrane. Its subcellular location is the host Golgi apparatus. It is found in the host trans-Golgi network. The protein resides in the host endoplasmic reticulum membrane. It catalyses the reaction a 1,2-diacyl-sn-glycero-3-phosphocholine + H2O = a 1,2-diacyl-sn-glycero-3-phosphate + choline + H(+). In terms of biological role, major envelope protein that plays a role in the biogenesis of the viral double membrane and in egress of virus from the host cell. Produces the wrapped form of virus that is required for cell-to-cell spread. Acts as a lipase with broad specificity including phospholipase C, phospholipase A, and triacylglycerol lipase activities. The sequence is that of Envelope phospholipase OPG057 (OPG057) from Variola virus (isolate Human/India/Ind3/1967) (VARV).